We begin with the raw amino-acid sequence, 197 residues long: Nucleoid occlusion factor SlmA (197 aa).

An HTH tetR-type domain is found at 7 to 67; that stretch reads INRREHILQC…GLIEFIEDAI (61 aa). The segment at residues 30 to 49 is a DNA-binding region (H-T-H motif); sequence TTAKLAAEVGVSEAALYRHF.

It belongs to the nucleoid occlusion factor SlmA family. Homodimer. Interacts with FtsZ.

The protein resides in the cytoplasm. Its subcellular location is the nucleoid. Required for nucleoid occlusion (NO) phenomenon, which prevents Z-ring formation and cell division over the nucleoid. Acts as a DNA-associated cell division inhibitor that binds simultaneously chromosomal DNA and FtsZ, and disrupts the assembly of FtsZ polymers. SlmA-DNA-binding sequences (SBS) are dispersed on non-Ter regions of the chromosome, preventing FtsZ polymerization at these regions. The sequence is that of Nucleoid occlusion factor SlmA from Shewanella denitrificans (strain OS217 / ATCC BAA-1090 / DSM 15013).